The primary structure comprises 164 residues: MPLHQLAIAPVDVSGALLGLVLNAPAPRPLATHRLAHTDGSALQLGVLGASHVVTVEGRFCEEVSCVARSRGGDLPESTHAPGYHLQSHTETHDEAAFRRLARHLRERCTRATGWLGGVFPGDDAALTALAAEPDGTGWRWRTWHLYPSASGGTVVHTTSRWRP.

This is an uncharacterized protein from Mycobacterium tuberculosis (strain CDC 1551 / Oshkosh).